We begin with the raw amino-acid sequence, 328 residues long: tRNA(Ile)-lysidine synthase (328 aa).

35-40 (SGGADS) is an ATP binding site.

The protein belongs to the tRNA(Ile)-lysidine synthase family.

The protein localises to the cytoplasm. The catalysed reaction is cytidine(34) in tRNA(Ile2) + L-lysine + ATP = lysidine(34) in tRNA(Ile2) + AMP + diphosphate + H(+). Its function is as follows. Ligates lysine onto the cytidine present at position 34 of the AUA codon-specific tRNA(Ile) that contains the anticodon CAU, in an ATP-dependent manner. Cytidine is converted to lysidine, thus changing the amino acid specificity of the tRNA from methionine to isoleucine. In Polaromonas naphthalenivorans (strain CJ2), this protein is tRNA(Ile)-lysidine synthase.